The primary structure comprises 290 residues: 33 kDa chaperonin (290 aa).

Cystine bridges form between Cys235–Cys237 and Cys268–Cys271.

This sequence belongs to the HSP33 family. Under oxidizing conditions two disulfide bonds are formed involving the reactive cysteines. Under reducing conditions zinc is bound to the reactive cysteines and the protein is inactive.

Its subcellular location is the cytoplasm. In terms of biological role, redox regulated molecular chaperone. Protects both thermally unfolding and oxidatively damaged proteins from irreversible aggregation. Plays an important role in the bacterial defense system toward oxidative stress. In Streptococcus pyogenes serotype M28 (strain MGAS6180), this protein is 33 kDa chaperonin.